We begin with the raw amino-acid sequence, 427 residues long: 5-hydroxybenzimidazole synthase BzaB (427 aa).

Belongs to the ThiC family. 5-hydroxybenzimidazole synthase subfamily. [4Fe-4S] cluster serves as cofactor.

It carries out the reaction 5-amino-1-(5-phospho-beta-D-ribosyl)imidazole + AH2 + S-adenosyl-L-methionine = 5-hydroxybenzimidazole + 5'-deoxyadenosine + formate + L-methionine + A + NH4(+) + phosphate + 2 H(+). The protein operates within cofactor biosynthesis; adenosylcobalamin biosynthesis. In terms of biological role, together with BzaA, catalyzes the conversion of aminoimidazole ribotide (AIR) to 5-hydroxybenzimidazole (5-HBI) in a radical S-adenosyl-L-methionine (SAM)-dependent reaction. Is thus involved in the anaerobic biosynthesis of dimethylbenzimidazole (DMB), the lower axial ligand of vitamin B12 (cobalamin). Requires BzaA for catalytic activity, as BzaB alone displays no activity. The chain is 5-hydroxybenzimidazole synthase BzaB from Eubacterium limosum.